The following is a 507-amino-acid chain: Bifunctional purine biosynthesis protein PurH (507 aa).

An MGS-like domain is found at 1-144 (MKRALLSVSD…KNSDSVWAVV (144 aa)).

This sequence belongs to the PurH family.

The catalysed reaction is (6R)-10-formyltetrahydrofolate + 5-amino-1-(5-phospho-beta-D-ribosyl)imidazole-4-carboxamide = 5-formamido-1-(5-phospho-D-ribosyl)imidazole-4-carboxamide + (6S)-5,6,7,8-tetrahydrofolate. It catalyses the reaction IMP + H2O = 5-formamido-1-(5-phospho-D-ribosyl)imidazole-4-carboxamide. It participates in purine metabolism; IMP biosynthesis via de novo pathway; 5-formamido-1-(5-phospho-D-ribosyl)imidazole-4-carboxamide from 5-amino-1-(5-phospho-D-ribosyl)imidazole-4-carboxamide (10-formyl THF route): step 1/1. It functions in the pathway purine metabolism; IMP biosynthesis via de novo pathway; IMP from 5-formamido-1-(5-phospho-D-ribosyl)imidazole-4-carboxamide: step 1/1. The chain is Bifunctional purine biosynthesis protein PurH from Lacticaseibacillus paracasei (strain ATCC 334 / BCRC 17002 / CCUG 31169 / CIP 107868 / KCTC 3260 / NRRL B-441) (Lactobacillus paracasei).